The sequence spans 250 residues: 5-oxoprolinase subunit A (250 aa).

Belongs to the LamB/PxpA family. As to quaternary structure, forms a complex composed of PxpA, PxpB and PxpC.

It catalyses the reaction 5-oxo-L-proline + ATP + 2 H2O = L-glutamate + ADP + phosphate + H(+). Functionally, catalyzes the cleavage of 5-oxoproline to form L-glutamate coupled to the hydrolysis of ATP to ADP and inorganic phosphate. The protein is 5-oxoprolinase subunit A of Staphylococcus aureus (strain MW2).